The primary structure comprises 118 residues: Large ribosomal subunit protein bL20 (118 aa).

It belongs to the bacterial ribosomal protein bL20 family.

Binds directly to 23S ribosomal RNA and is necessary for the in vitro assembly process of the 50S ribosomal subunit. It is not involved in the protein synthesizing functions of that subunit. The polypeptide is Large ribosomal subunit protein bL20 (Desulfovibrio desulfuricans (strain ATCC 27774 / DSM 6949 / MB)).